Here is a 287-residue protein sequence, read N- to C-terminus: 4-hydroxybenzoate octaprenyltransferase (287 aa).

Helical transmembrane passes span 22 to 42 (IGTLLLLWPTLWALWIAAQGF), 45 to 65 (LGVLIVFSAGVFLMRSAGCVI), 91 to 111 (TSTEAIILFFILAIVSFLLVL), 114 to 134 (NSLTIQLSFAGLLLAFAYPFM), 139 to 159 (QLPQLVLGLAFSWSIPMAFAA), 161 to 181 (ANALPAVVWIIFAVNIIWTIA), 212 to 232 (IIIALLQLTSLILLSLLGWLE), 236 to 256 (WIYFIALLVVGGLFLRQQLQI), and 267 to 287 (AFLDNNYVGFVIFAGLFLGYL).

This sequence belongs to the UbiA prenyltransferase family. Mg(2+) is required as a cofactor.

The protein resides in the cell inner membrane. It carries out the reaction all-trans-octaprenyl diphosphate + 4-hydroxybenzoate = 4-hydroxy-3-(all-trans-octaprenyl)benzoate + diphosphate. Its pathway is cofactor biosynthesis; ubiquinone biosynthesis. Functionally, catalyzes the prenylation of para-hydroxybenzoate (PHB) with an all-trans polyprenyl group. Mediates the second step in the final reaction sequence of ubiquinone-8 (UQ-8) biosynthesis, which is the condensation of the polyisoprenoid side chain with PHB, generating the first membrane-bound Q intermediate 3-octaprenyl-4-hydroxybenzoate. The protein is 4-hydroxybenzoate octaprenyltransferase of Psychromonas ingrahamii (strain DSM 17664 / CCUG 51855 / 37).